The sequence spans 208 residues: dITP/XTP pyrophosphatase (208 aa).

16 to 21 (SNNKGK) contacts substrate. D79 (proton acceptor) is an active-site residue. D79 lines the Mg(2+) pocket. Substrate contacts are provided by residues S80, 166-169 (FGYD), K189, and 194-195 (HR).

The protein belongs to the HAM1 NTPase family. In terms of assembly, homodimer. It depends on Mg(2+) as a cofactor.

The enzyme catalyses XTP + H2O = XMP + diphosphate + H(+). It carries out the reaction dITP + H2O = dIMP + diphosphate + H(+). It catalyses the reaction ITP + H2O = IMP + diphosphate + H(+). Its function is as follows. Pyrophosphatase that catalyzes the hydrolysis of nucleoside triphosphates to their monophosphate derivatives, with a high preference for the non-canonical purine nucleotides XTP (xanthosine triphosphate), dITP (deoxyinosine triphosphate) and ITP. Seems to function as a house-cleaning enzyme that removes non-canonical purine nucleotides from the nucleotide pool, thus preventing their incorporation into DNA/RNA and avoiding chromosomal lesions. The chain is dITP/XTP pyrophosphatase from Acinetobacter baumannii (strain AB307-0294).